The following is a 181-amino-acid chain: Biofilm-surface layer protein A (181 aa).

The signal sequence occupies residues 1–28 (MKRKLLSSLAISALSLGLLVSAPTASFA).

The protein belongs to the BslA/BslB family. As to quaternary structure, forms polymers.

The protein localises to the secreted. It is found in the cell wall. In terms of biological role, involved in biofilm formation. Self-polymerizes and forms a layer on the surface of biofilms that confers hydrophobicity to the biofilm. The layer is stable and capable of resistance to high mechanical force compression. Required for complex colony architecture. May function synergistically with exopolysaccharides and TasA amyloid fibers to facilitate the assembly of the biofilm matrix. This Bacillus subtilis (strain 168) protein is Biofilm-surface layer protein A.